Consider the following 205-residue polypeptide: Holliday junction branch migration complex subunit RuvA (205 aa).

Residues 1 to 65 form a domain I region; it reads MIGRLRGAVA…SAGLRLYGFL (65 aa). Residues 66-144 form a domain II region; sequence TREDRRAFVL…TDGPVLMSAP (79 aa). The segment at 145 to 153 is flexible linker; it reads TSSAPSAPA. The segment at 153 to 205 is domain III; the sequence is AKPAPTGDAVAALMGLGVAEVNARRVVEAAAAELGEEATVQALIKAGLKELGR.

This sequence belongs to the RuvA family. In terms of assembly, homotetramer. Forms an RuvA(8)-RuvB(12)-Holliday junction (HJ) complex. HJ DNA is sandwiched between 2 RuvA tetramers; dsDNA enters through RuvA and exits via RuvB. An RuvB hexamer assembles on each DNA strand where it exits the tetramer. Each RuvB hexamer is contacted by two RuvA subunits (via domain III) on 2 adjacent RuvB subunits; this complex drives branch migration. In the full resolvosome a probable DNA-RuvA(4)-RuvB(12)-RuvC(2) complex forms which resolves the HJ.

It is found in the cytoplasm. Functionally, the RuvA-RuvB-RuvC complex processes Holliday junction (HJ) DNA during genetic recombination and DNA repair, while the RuvA-RuvB complex plays an important role in the rescue of blocked DNA replication forks via replication fork reversal (RFR). RuvA specifically binds to HJ cruciform DNA, conferring on it an open structure. The RuvB hexamer acts as an ATP-dependent pump, pulling dsDNA into and through the RuvAB complex. HJ branch migration allows RuvC to scan DNA until it finds its consensus sequence, where it cleaves and resolves the cruciform DNA. This Caulobacter vibrioides (strain ATCC 19089 / CIP 103742 / CB 15) (Caulobacter crescentus) protein is Holliday junction branch migration complex subunit RuvA.